Consider the following 669-residue polypeptide: DNA mismatch repair protein MutL (669 aa).

Positions Glu357 to Ser379 are disordered. Residues Asn361 to Ser379 are compositionally biased toward polar residues.

This sequence belongs to the DNA mismatch repair MutL/HexB family.

In terms of biological role, this protein is involved in the repair of mismatches in DNA. It is required for dam-dependent methyl-directed DNA mismatch repair. May act as a 'molecular matchmaker', a protein that promotes the formation of a stable complex between two or more DNA-binding proteins in an ATP-dependent manner without itself being part of a final effector complex. In Staphylococcus aureus (strain Mu3 / ATCC 700698), this protein is DNA mismatch repair protein MutL.